Reading from the N-terminus, the 552-residue chain is CTP synthase (552 aa).

An amidoligase domain region spans residues 1 to 270; the sequence is MTKFVFVTGG…DGLICDKLRL (270 aa). Serine 13 lines the CTP pocket. Serine 13 serves as a coordination point for UTP. ATP is bound by residues 14–19 and aspartate 71; that span reads SLGKGI. Mg(2+) contacts are provided by aspartate 71 and glutamate 144. CTP contacts are provided by residues 151–153, 191–196, and lysine 227; these read DIE and KTKPTQ. UTP contacts are provided by residues 191–196 and lysine 227; that span reads KTKPTQ. A Glutamine amidotransferase type-1 domain is found at 295–548; the sequence is KIAMVGKYVE…VKAAIERQKA (254 aa). Glycine 357 is an L-glutamine binding site. The active-site Nucleophile; for glutamine hydrolysis is the cysteine 384. L-glutamine-binding positions include 385 to 388, glutamate 408, and arginine 474; that span reads LGMQ. Residues histidine 521 and glutamate 523 contribute to the active site.

It belongs to the CTP synthase family. As to quaternary structure, homotetramer.

It carries out the reaction UTP + L-glutamine + ATP + H2O = CTP + L-glutamate + ADP + phosphate + 2 H(+). The catalysed reaction is L-glutamine + H2O = L-glutamate + NH4(+). It catalyses the reaction UTP + NH4(+) + ATP = CTP + ADP + phosphate + 2 H(+). The protein operates within pyrimidine metabolism; CTP biosynthesis via de novo pathway; CTP from UDP: step 2/2. Its activity is regulated as follows. Allosterically activated by GTP, when glutamine is the substrate; GTP has no effect on the reaction when ammonia is the substrate. The allosteric effector GTP functions by stabilizing the protein conformation that binds the tetrahedral intermediate(s) formed during glutamine hydrolysis. Inhibited by the product CTP, via allosteric rather than competitive inhibition. Functionally, catalyzes the ATP-dependent amination of UTP to CTP with either L-glutamine or ammonia as the source of nitrogen. Regulates intracellular CTP levels through interactions with the four ribonucleotide triphosphates. The chain is CTP synthase from Delftia acidovorans (strain DSM 14801 / SPH-1).